The sequence spans 402 residues: Hyaluronan and proteoglycan link protein 4 (402 aa).

The N-terminal stretch at 1-29 is a signal peptide; sequence MVCARAALGPGALWAAAWGVLLLTAPAGA. The Ig-like C2-type domain occupies 46-161; sequence SVVVQTAPGQ…DAGMVKLDLE (116 aa). 5 disulfide bridges follow: Cys68–Cys143, Cys185–Cys266, Cys209–Cys230, Cys293–Cys363, and Cys318–Cys339. Residue Asn132 is glycosylated (N-linked (GlcNAc...) asparagine). 2 consecutive Link domains span residues 163–268 and 273–365; these read VVFP…FCFT and GRVF…YCYR.

This sequence belongs to the HAPLN family. In terms of tissue distribution, expressed predominantly in brain.

The protein localises to the secreted. It is found in the extracellular space. It localises to the extracellular matrix. In terms of biological role, essential for the proper localization of brevican (BCAN), mainly as a perineuronal nets (PNNs)-type deposition in the brainstem and cerebellum thereby playing a key role in the formation and structural organization of PNNs. Contributes to the formation and transmission of inhibitory GABAergic synapses between Purkinje cells and deep cerebellar nuclei neurons. This is Hyaluronan and proteoglycan link protein 4 (HAPLN4) from Homo sapiens (Human).